A 180-amino-acid chain; its full sequence is GTP cyclohydrolase 1 (180 aa).

Positions 71, 74, and 142 each coordinate Zn(2+).

Belongs to the GTP cyclohydrolase I family. Toroid-shaped homodecamer, composed of two pentamers of five dimers.

The catalysed reaction is GTP + H2O = 7,8-dihydroneopterin 3'-triphosphate + formate + H(+). It functions in the pathway cofactor biosynthesis; 7,8-dihydroneopterin triphosphate biosynthesis; 7,8-dihydroneopterin triphosphate from GTP: step 1/1. The protein is GTP cyclohydrolase 1 of Helicobacter acinonychis (strain Sheeba).